Consider the following 194-residue polypeptide: Prefoldin subunit 3 (194 aa).

Belongs to the prefoldin subunit alpha family. Heterohexamer of two PFD-alpha type and four PFD-beta type subunits. Interacts with itself. Interacts with Vhl and betaTub56D/tubulin beta-1 chain. Interacts with tubulin alpha-beta heterodimers by itself or in complex with Vhl. Does not interact with microtubules (MTs). In terms of tissue distribution, expressed in larval central nervous system (CNS) and pupal testis (at protein level).

The protein resides in the cytoplasm. Functionally, binds specifically to cytosolic chaperonin (c-CPN) and transfers target proteins to it. Binds to nascent polypeptide chain and promotes folding in an environment in which there are many competing pathways for nonnative proteins. Required for tubulin stability and spindle and centrosome formation in cooperation with Vhl. This is Prefoldin subunit 3 (mgr) from Drosophila melanogaster (Fruit fly).